The following is an 839-amino-acid chain: Mitochondrial 15S rRNA processing factor CCM1 (839 aa).

A mitochondrion-targeting transit peptide spans 1 to 59; the sequence is MLSLKSRGSWNVLRWIQVPRRTAVIPAKPSPMRRKRRRIKNVSSKDLDLRGIDPQDSRA. 2 PPR repeats span residues 313–347 and 350–384; these read NRENYTTVIQFYVKFGVSKQAWDVFDTMKFLSSSH and DVTTYNSVLHLCNRERDYAKAIDLYEEMLDRQLQP.

The protein belongs to the CCM1 family. Binds to mitochondrial small subunit 15S rRNA.

Its subcellular location is the mitochondrion. Regulates mitochondrial small subunit maturation by controlling 15S rRNA 5'-end processing. Localizes to the 5' precursor of the 15S rRNA in a position that is subsequently occupied by mS47 in the mature yeast mtSSU. Uses structure and sequence-specific RNA recognition, binding to a single-stranded region of the precursor and specifically recognizing bases -6 to -1. The exchange of Ccm1 for mS47 is coupled to the irreversible removal of precursor rRNA that is accompanied by conformational changes of the mitoribosomal proteins uS5m and mS26. These conformational changes signal completion of 5'-end rRNA processing through protection of the mature 5'-end of the 15S rRNA and stabilization of mS47. The removal of the 5' precursor together with the dissociation of Ccm1 may be catalyzed by the 5'-3' exoribonuclease Pet127. Involved in the specific removal of group I introns in mitochondrial encoded transcripts. The protein is Mitochondrial 15S rRNA processing factor CCM1 (CCM1) of Zygosaccharomyces rouxii (strain ATCC 2623 / CBS 732 / NBRC 1130 / NCYC 568 / NRRL Y-229).